A 228-amino-acid chain; its full sequence is Probable septum site-determining protein MinC (228 aa).

This sequence belongs to the MinC family. As to quaternary structure, interacts with MinD and FtsZ.

Functionally, cell division inhibitor that blocks the formation of polar Z ring septums. Rapidly oscillates between the poles of the cell to destabilize FtsZ filaments that have formed before they mature into polar Z rings. Prevents FtsZ polymerization. The polypeptide is Probable septum site-determining protein MinC (Bacillus cereus (strain G9842)).